The chain runs to 292 residues: High-affinity heme uptake system protein IsdE (292 aa).

The N-terminal stretch at M1–S19 is a signal peptide. A lipid anchor (N-palmitoyl cysteine) is attached at C20. C20 carries the S-diacylglycerol cysteine lipid modification. The region spanning R35–K291 is the Fe/B12 periplasmic-binding domain. Residues V41, A42, S60, Y61, M78, and H229 each contribute to the heme site.

It belongs to the bacterial solute-binding protein 8 family. Heme b is required as a cofactor.

It localises to the cell membrane. Functionally, involved in heme (porphyrin) scavenging. Binds Fe(2+) and Fe(3+) heme but the largest fraction is Fe(2+) heme. Functions as a high-affinity heme binding protein and probably has a role in relaying heme-iron from cell wall-anchored isd proteins receptors to the probable permease IsdF. The polypeptide is High-affinity heme uptake system protein IsdE (isdE) (Staphylococcus aureus (strain bovine RF122 / ET3-1)).